The chain runs to 902 residues: Protein translocase subunit SecA (902 aa).

ATP-binding positions include glutamine 85, 103–107 (GEGKT), and aspartate 492. The disordered stretch occupies residues 846–902 (LSYSGGGEEPNQRPKSPRRRSERKIGPNEPCPCGSGKKFKKCHGRVGAPPLPTSQSQ). Zn(2+) is bound by residues cysteine 876, cysteine 878, cysteine 887, and histidine 888.

This sequence belongs to the SecA family. As to quaternary structure, monomer and homodimer. Part of the essential Sec protein translocation apparatus which comprises SecA, SecYEG and auxiliary proteins SecDF. Other proteins may also be involved. The cofactor is Zn(2+).

The protein resides in the cell membrane. Its subcellular location is the cytoplasm. The catalysed reaction is ATP + H2O + cellular proteinSide 1 = ADP + phosphate + cellular proteinSide 2.. Part of the Sec protein translocase complex. Interacts with the SecYEG preprotein conducting channel. Has a central role in coupling the hydrolysis of ATP to the transfer of proteins into and across the cell membrane, serving as an ATP-driven molecular motor driving the stepwise translocation of polypeptide chains across the membrane. The sequence is that of Protein translocase subunit SecA from Rubrobacter xylanophilus (strain DSM 9941 / JCM 11954 / NBRC 16129 / PRD-1).